Here is a 2513-residue protein sequence, read N- to C-terminus: MEKDTPVAIIGVSYRAPGIGGKGLWDYLAEAKSAWTKVPPERFEHFAWYKAGEKKTGVFANEGAHFVDNVFDFDAAFFNMRADEARCADPSHRFMLEVALEAAENAGQSLLDLSGKKIGVFVGAGQHEYSHRVSDDEYAIQTFTATGVAPCMAANRLSYFFDIDGPSVVLDAACASSAYAVDMAVKAIRNGDCDGAFVGAAALNLSPSGWLVLDQSGTLSDIGRSFSYDAKASGFGRGEGAACLLIKRLEDAIRDGDPIQALIRGTACSHSGRSEGITMPSRRAQEKLIWDVHNSAGLDPSNTAVVEVFSRGHGTGTAVGDPIEAGAFTSVLARNRTAANPIYIGSLKSNFGHLEGASGVLAMIKAVLMVRNGVVLPTAGFERINEAIDNYEKIKVPTTPLPWPENEPRRCLVTNFGFGGSSSAVIIDRSPYLHALDGYEDLADIKIPRLNGSSGRSESGSGQSQRLFVFSAKTRDSLTAYLASFHEYLLKAQESHEFLKDLSYTLGQRRTHHAYRASVVANSISDLRKEIPNLKPSKIRQRSVIFVFTGQGAQYARMAYNLRQFTVFAETLEKAETQLNKMGASWSLTEELNKLTDTRINDAEISQPACTAVQLAMVALLQSWGVVPNMVTGHSSGEIAAAFTAGLLTFQEAIAISYFRGQSAVQLSAAQHEYKKGAMLALGVGSEDALKIIDEHAQGYATVAAINSPRSVTISGDKTAIENVRKAADMQGLFARMLKVEVAYHSRHMEQVAASYLKDIEPYFQGKAIPAENSGACRPVFVSSVTGQIIDAVDSSYWIKNLVQPVLFADAIKEVLTHEDQGKSQSIHGSSKTLVEIGPHAALKNPVKQTAELLSSERAWNLASLNYLPSLLRGTNDVHAILELARALFDLGASVELSGVNGTNKHNARVLTELPSYAWDRSYYELRPRVTHDKQFPGEEYHALIGRKAPSNAAQENTYRQVFTLDEMPWIRDHVVSGVTVFPMTGYMSCAIEAARRVDSAAPAAFLITDFHVVQSLEIHEEETVDLTTKLKPAATGEGTFSSKVWSFEVVSWSEANGWTRHCWGKIEPEIADLTLATPTFEASLPLVTSMAGVIEHDMDNEYHNIELRGTKYGPSFRNNVKFYEGKNYTVLEHRIRDLGDALKIPVYRGSPVSVDPPTLDSFLQGAGPFQYDGSGRRLTQMPDYISRFRISNNITSEPNHRLDVVMRRLDYDDKGGRMHVSVAVFGRGSDDQFTPIAEWESFTFRTVSSADDQSASVPDNWSWELLPRYDLISKDTLRDRLLESVGDLGEEEDVRMSKLDAVGCYYIEKALKDTVTLDYSKLPTHLARFVHWGRNVLKEYEVNFESEPTSLLEDVRNLDAQGELLCLMGENLVDILAGRIEPLEVMLTDGRLMRHYEADVANAHLSKIIGYLTENMADLEPWQRILEIGGGTAGTTLPVLEGLSRNRDEPGCLDYTFTDISSGFFEMASKKLSRWSQQITYKRLDITQDPAMQGFTQESYDVVVAANVLHATADMVTTMTHVRSLLKPGGKLILLEATRHPPWLLPFTLLPDWWAAKDKYRDHKQGPMMPAVVWNDLLLDSGFSGVDVVIPTNYRTDNPLMNVVCSTRIGKQDDSETITICGPLVDDTEVNFAQSVARSISKELGCPTEIKRFADIKPDDESYYILLDSKHESVFQNFNPGKFECLKSLLLRNKGLLWVTAKGCSPDAKMIQGMVRTVRLEVEPKNLMLLDNVPSTPEGLSGILKLAARLRDPEVSRDQDMDFAWHDGAIHLPRMRQLKDLKEQFSVEEGVAFRRTQNLRDNSDRGLEMTIQAAGSPDTIYFRRTDPYEVSEDEVLVRVEAAGVGHRDFEVLMGSIPWAPPGYEGAGKVLKIGSQVSHLREGDDVFFLTPEASAFATEVKLASWLVARIPKNMTVTDAAACPLGYCLATLAFRTARLTKNETVLIHSAASSVGQACILLAQDIGARIYVTAGTEDKRDYLHQALGIPRDHIFSSRTAEFRDSLLCKTNNRGVDVVVNSLSGELLTETWAVIAAFGRFVEIGKKDAFLNNSLPMRPFNNNVTLSAIDLRDLYHHRPDDVRSVWNEVVNLLQRKQVRPVDSASVVSISHFSAALRILRSRDHIGRLVVTLGDDNSVMAETALRPSQVSLKDDATYLVAGGTRGIGLDLAYWMIEHGARNIVLLGRSGASGPEAQKILNKFRNTKVCVRAVACNVGDRDELQNALESIKDLPAIRGVVHSALLLSDKLFVNASYEDWVINTTPRVAGAWNLDDLLPTDLDFFVALSSFNGDTGHTGQAIYAGTAGFYNAFSQYRNNRGQYTVSIGLPVVLDVGYVADHDLRGGLLNDSLSAGVTMADIRATFNCILLGPSSPFVRNGRASTFKVYINGQPVQDVTWNYFHPAHSKVRLTNANRNKVKATSGGAEISSASWTTAEDPLTGLIEALIAKVSAMTMMEREDVLPDAPLASYSLDSLVSVELRNWIRRETTAEMTLVSITKAENLRALAVNILAQRKAG.

Residues 4–429 enclose the Ketosynthase family 3 (KS3) domain; sequence DTPVAIIGVS…GSSSAVIIDR (426 aa). Active-site for beta-ketoacyl synthase activity residues include Cys-174, His-313, and His-353. Positions 547–875 are malonyl-CoA:ACP transacylase (MAT) domain; sequence VFTGQGAQYA…NYLPSLLRGT (329 aa). The For malonyltransferase activity role is filled by Ser-635. An N-terminal hotdog fold region spans residues 942–1074; sequence HALIGRKAPS…GKIEPEIADL (133 aa). Positions 942–1253 are dehydratase (DH) domain; it reads HALIGRKAPS…TFRTVSSADD (312 aa). Positions 942 to 1254 constitute a PKS/mFAS DH domain; the sequence is HALIGRKAPS…FRTVSSADDQ (313 aa). Residue His-974 is the Proton acceptor; for dehydratase activity of the active site. The C-terminal hotdog fold stretch occupies residues 1092–1254; that stretch reads AGVIEHDMDN…FRTVSSADDQ (163 aa). The Proton donor; for dehydratase activity role is filled by Asp-1161. Residues 1407 to 1600 form a methyltransferase (CMet) domain region; sequence SKIIGYLTEN…IPTNYRTDNP (194 aa). Positions 1816–2127 are enoylreductase (ER) domain; the sequence is GSPDTIYFRR…SRDHIGRLVV (312 aa). Residues 2152-2327 form a ketoreductase (KR) domain region; it reads ATYLVAGGTR…YTVSIGLPVV (176 aa). Residues 2433 to 2510 form the Carrier domain; the sequence is DPLTGLIEAL…ALAVNILAQR (78 aa). Ser-2470 carries the post-translational modification O-(pantetheine 4'-phosphoryl)serine.

Its pathway is mycotoxin biosynthesis. Its function is as follows. Highly reducing polyketide synthase; part of the gene cluster that mediates the biosynthesis of the host-selective toxins (HSTs) ACR-toxins responsible for brown spot of rough lemon disease by the rough lemon pathotype. ACR-toxins cause uncoupling of mitochondrial oxidative-phosphorylation similar to that of classic protonophore. The structure of the major form of ACR-toxin (ACR-toxin I) consists of an alpha-dihydropyrone ring in a 19-carbon polyalcohol, a typical polyketide structure. Minor toxins were characterized as having a pyrone ring with polyalcohol side chains different in length and showing weaker toxicity. The highly reducing polyketide synthase ACRTS2 has all necessary enzymatic domains for multiple cycles of condensation and beta-keto processing. The cytochrome P450 monooxygenase ACRTS1 has also been shown to be essential for ACR-toxin biosynthesis, however its exact role in the pathway has not been elucidated yet. In Alternaria alternata (Alternaria rot fungus), this protein is Highly reducing polyketide synthase ACRTS2.